The primary structure comprises 24 residues: Brevinin-1JDb (24 aa).

An intrachain disulfide couples C18 to C24.

Expressed by the skin glands.

The protein localises to the secreted. Functionally, has antibacterial activity against E.coli and S.aureus strains. Has antifungal activity against C.albicans. Has hemolytic activity against rabbit erythrocytes. The sequence is that of Brevinin-1JDb from Odorrana jingdongensis (Jingdong frog).